A 248-amino-acid polypeptide reads, in one-letter code: Zinc finger CCCH domain-containing protein 36 (248 aa).

2 disordered regions span residues Met1 to Ser37 and Met87 to Phe110. A C3H1-type 1 zinc finger spans residues Gly36 to Pro64. Over residues Ser90 to Gly103 the composition is skewed to gly residues. The 65-residue stretch at Ser113–Val177 folds into the KH domain. Positions Ala188–His209 are disordered. The span at Pro192 to Ser204 shows a compositional bias: gly residues. The C3H1-type 2 zinc-finger motif lies at Asn213–Ala240.

The sequence is that of Zinc finger CCCH domain-containing protein 36 from Arabidopsis thaliana (Mouse-ear cress).